The chain runs to 3189 residues: Beauvericin nonribosomal cyclodepsipeptide synthetase (3189 aa).

The interval 73–466 is condensation 1; the sequence is HAMYEISQHV…EQLQSAADDA (394 aa). Positions 202–223 are disordered; it reads DSLPLTPDSSGGSDSDSPSTLK. Low complexity predominate over residues 208 to 220; sequence PDSSGGSDSDSPS. An adenylation 1 region spans residues 507 to 901; that stretch reads AESPSDPAVL…GRIDSQVKIR (395 aa). The Carrier 1 domain occupies 1036 to 1112; the sequence is TLETGPEARL…RLQAVMSGDS (77 aa). Serine 1073 carries the post-translational modification O-(pantetheine 4'-phosphoryl)serine. The interval 1136-1569 is condensation 2; that stretch reads SYSQGRLWFL…KSLISVLPLT (434 aa). The segment at 1599–2004 is adenylation 2; it reads FRSQVATCPD…GRMDFQFKIR (406 aa). The tract at residues 2072–2211 is S-adenosyl-L-methionine-dependent N-methyltransferase; it reads MYNGIDAISP…FPTVEYLTRV (140 aa). Carrier domains follow at residues 2557–2631 and 2654–2728; these read CPIS…REGL and APRN…ELGQ. Residues serine 2591 and serine 2688 each carry the O-(pantetheine 4'-phosphoryl)serine modification. The interval 2773-3181 is condensation 3; it reads QDVYPATHMQ…AYLMEEVCRL (409 aa).

The protein belongs to the NRP synthetase family.

The enzyme catalyses 3 (R)-2-hydroxy-3-methylbutanoate + 3 L-phenylalanine + 3 S-adenosyl-L-methionine + 6 ATP = beauvericin + 6 AMP + 3 S-adenosyl-L-homocysteine + 6 diphosphate + 6 H(+). Beauvericin nonribosomal cyclodepsipeptide synthetase; part of the gene cluster that mediates the biosynthesis of beauvericin (BEA), a non-ribosomal cyclic hexadepsipeptide that shows antibiotic, antifungal, insecticidal, and cancer cell antiproliferative and antihaptotactic activity. Ketoisovalerate reductase BEA2 catalyzes the NADPH-specific reduction of ketoisovaleric acid to hydroxyisovalerate, a precursor for beauvericin biosynthesis. The nonribosomal cyclodepsipeptide synthetase BEA1 then catalyzes the formation of beauvericin via condensation and cyclization of 3 dipeptidol monomers, each composed of one unit of hydroxyisovalerate and one unit of N-methyl-phenylalanine. In Beauveria bassiana (White muscardine disease fungus), this protein is Beauvericin nonribosomal cyclodepsipeptide synthetase (Beas).